The chain runs to 799 residues: Pentatricopeptide repeat-containing protein At2g26790, mitochondrial (799 aa).

The transit peptide at 1 to 27 (MRFSPTFFLLSQLRLTRRRAATSSRFY) directs the protein to the mitochondrion. PPR repeat units follow at residues 145-179 (LIRVSGALVKAYVSLGMFDEATDVLFQSKRLDCVV), 180-214 (DIKACNFLMNRMTEFGKIGMLMTLFKQLKQLGLCA), 215-250 (NEYTYAIVVKALCRKGNLEEAAMLLIENESVFGYKT), 251-278 (FINGLCVTGETEKAVALILELIDRKYLA), 282-316 (LRAVLGMVVRGFCNEMKMKAAESVIIEMEEIGFGL), 317-351 (DVYACLAVIDRYCKNMNLPEALGFLDKMLGKGLKV), 352-386 (NCVIVSLILQCYCKMDMCLEALEKFKEFRDMNIFL), 387-421 (DRVCYNVAFDALSKLGRVEEAFELLQEMKDRGIVP), 422-456 (DVINYTTLIDGYCLQGKVVDALDLIDEMIGNGMSP), 457-491 (DLITYNVLVSGLARNGHEEEVLEIYERMKAEGPKP), 492-522 (NAVTNSVIIEGLCFARKVKEAEDFFSSLEQK), 523-553 (CPENKASFVKGYCEAGLSKKAYKAFVRLEYP), 555-589 (RKSVYIKLFFSLCIEGYLEKAHDVLKKMSAYRVEP), 590-624 (GRSMCGKMIGAFCKLNNVREAQVLFDTMVERGLIP), 625-659 (DLFTYTIMIHTYCRLNELQKAESLFEDMKQRGIKP), 660-695 (DVVTYTVLLDRYLKLDPEHHETCSVQGEVGKRKASE), 708-742 (DVVCYTVLIDRQCKMNNLEQAAELFDRMIDSGLEP), and 743-777 (DMVAYTTLISSYFRKGYIDMAVTLVTELSKKYNIP).

This sequence belongs to the PPR family. P subfamily.

The protein localises to the mitochondrion. This chain is Pentatricopeptide repeat-containing protein At2g26790, mitochondrial, found in Arabidopsis thaliana (Mouse-ear cress).